A 333-amino-acid chain; its full sequence is Adenosine deaminase (333 aa).

Zn(2+) is bound by residues His-12 and His-14. Residues His-14, Asp-16, and Gly-170 each coordinate substrate. Residue His-197 participates in Zn(2+) binding. Glu-200 acts as the Proton donor in catalysis. Asp-278 provides a ligand contact to Zn(2+). Residue Asp-279 coordinates substrate.

It belongs to the metallo-dependent hydrolases superfamily. Adenosine and AMP deaminases family. Adenosine deaminase subfamily. Requires Zn(2+) as cofactor.

It catalyses the reaction adenosine + H2O + H(+) = inosine + NH4(+). The enzyme catalyses 2'-deoxyadenosine + H2O + H(+) = 2'-deoxyinosine + NH4(+). Catalyzes the hydrolytic deamination of adenosine and 2-deoxyadenosine. The protein is Adenosine deaminase of Edwardsiella ictaluri (strain 93-146).